The following is a 631-amino-acid chain: Putative meiotic phospholipase SPO1 (631 aa).

An N-terminal signal peptide occupies residues methionine 1–alanine 17. The interval glutamine 24–alanine 67 is required for lipid-binding and function in meiosis. The 608-residue stretch at glutamine 24 to serine 631 folds into the PLA2c domain. Residues asparagine 233, asparagine 293, and asparagine 303 are each glycosylated (N-linked (GlcNAc...) asparagine). A helical membrane pass occupies residues phenylalanine 376 to alanine 396. N-linked (GlcNAc...) asparagine glycans are attached at residues asparagine 500, asparagine 536, asparagine 560, asparagine 563, and asparagine 572.

The protein belongs to the lysophospholipase family. As to quaternary structure, interacts with SPO23. In terms of processing, glycosylated.

It is found in the endoplasmic reticulum membrane. Its subcellular location is the nucleus membrane. Functionally, regulates spindle pole duplication in meiosis I, but not in mitosis. Required for meiosis I, meiosis II chromosome segregation and spore formation. Binds phosphatidylinositol (4)P mono- and polyphosphates. The sequence is that of Putative meiotic phospholipase SPO1 (SPO1) from Saccharomyces cerevisiae (strain ATCC 204508 / S288c) (Baker's yeast).